The following is a 196-amino-acid chain: Gastrula zinc finger protein XlCGF8.2DB (196 aa).

C2H2-type zinc fingers lie at residues Phe-6–His-28, Phe-34–His-56, Phe-62–His-84, Phe-90–His-112, Phe-118–His-140, Phe-146–His-168, and Phe-174–His-196.

The protein belongs to the krueppel C2H2-type zinc-finger protein family.

The protein resides in the nucleus. Its function is as follows. May be involved in transcriptional regulation. In Xenopus laevis (African clawed frog), this protein is Gastrula zinc finger protein XlCGF8.2DB.